We begin with the raw amino-acid sequence, 180 residues long: MLPPGLESTQMKQTERRILLGRIVGAFGVKGELKLESWTEPRTAIFRYQPWIVRAPSGQESVVSGVRGRDQGKNLIAVFPGVTDRDTVEAMHGTEIYVARSALPPPKPDEYYWVDLEELQVETVEGVKLGTVSHLFSTGSNDVVVVRGDRERMIPFVFPDFVKSVDFDANLIVVDWDPDF.

A PRC barrel domain is found at 108–180 (PDEYYWVDLE…LIVVDWDPDF (73 aa)).

This sequence belongs to the RimM family. Binds ribosomal protein uS19.

Its subcellular location is the cytoplasm. Functionally, an accessory protein needed during the final step in the assembly of 30S ribosomal subunit, possibly for assembly of the head region. Essential for efficient processing of 16S rRNA. May be needed both before and after RbfA during the maturation of 16S rRNA. It has affinity for free ribosomal 30S subunits but not for 70S ribosomes. The protein is Ribosome maturation factor RimM of Xanthomonas euvesicatoria pv. vesicatoria (strain 85-10) (Xanthomonas campestris pv. vesicatoria).